The chain runs to 383 residues: MNDVIRDFFKMESAGGILLVIAAAIAMTIANSPLGETYQSLLHTYVFGMSVSHWINDGLMAVFFLLIGLEVKRELLEGALKSKETAIFPAIAAVGGMLAPALIYVAFNANDPEAISGWAIPAATDIAFALGIMALLGKRVPVSLKVFLLALAIIDDLGVVVIIALFYTGDLSSMALLVGFVMTGVLFMLNAKEVTKLTPYMIVGAILWFAVLKSGVHATLAGVVIGFAIPLKGKQGEHSPLKHMEHALHPYVAFGILPLFAFANAGISLEGVSMSGLTSMLPLGIALGLLIGKPLGIFSFSWAAVKLGVAKLPEGINFKHIFAVSVLCGIGFTMSIFISSLAFGNVSPEFDTYARLGILMGSTTAAVLGYALLHFSLPKKAQD.

A run of 11 helical transmembrane segments spans residues 14 to 34 (AGGI…NSPL), 47 to 67 (FGMS…FLLI), 87 to 107 (IFPA…YVAF), 117 to 137 (GWAI…ALLG), 146 to 166 (VFLL…IALF), 171 to 191 (LSSM…MLNA), 205 to 225 (AILW…GVVI), 252 to 272 (VAFG…LEGV), 280 to 300 (MLPL…IFSF), 321 to 341 (IFAV…ISSL), and 356 to 376 (LGIL…LHFS).

The protein belongs to the NhaA Na(+)/H(+) (TC 2.A.33) antiporter family.

It is found in the cell inner membrane. The enzyme catalyses Na(+)(in) + 2 H(+)(out) = Na(+)(out) + 2 H(+)(in). It carries out the reaction Li(+)(in) + 2 H(+)(out) = Li(+)(out) + 2 H(+)(in). Activity is regulated by pH. Active at alkaline pH. Amiloride strongly reduces affinity for Na(+), but does not change the Vmax. Functionally, na(+)/H(+) antiporter that extrudes sodium in exchange for external protons. Can also transport lithium and potassium. This Vibrio parahaemolyticus serotype O3:K6 (strain RIMD 2210633) protein is Na(+)/H(+) antiporter NhaA.